The sequence spans 314 residues: Aspartate carbamoyltransferase catalytic subunit (314 aa).

The carbamoyl phosphate site is built by Arg58 and Thr59. Lys86 serves as a coordination point for L-aspartate. Residues Arg108, His136, and Gln139 each coordinate carbamoyl phosphate. L-aspartate is bound by residues Arg169 and Arg223. The carbamoyl phosphate site is built by Gly264 and Pro265.

Belongs to the aspartate/ornithine carbamoyltransferase superfamily. ATCase family. As to quaternary structure, heterododecamer (2C3:3R2) of six catalytic PyrB chains organized as two trimers (C3), and six regulatory PyrI chains organized as three dimers (R2).

The catalysed reaction is carbamoyl phosphate + L-aspartate = N-carbamoyl-L-aspartate + phosphate + H(+). It participates in pyrimidine metabolism; UMP biosynthesis via de novo pathway; (S)-dihydroorotate from bicarbonate: step 2/3. In terms of biological role, catalyzes the condensation of carbamoyl phosphate and aspartate to form carbamoyl aspartate and inorganic phosphate, the committed step in the de novo pyrimidine nucleotide biosynthesis pathway. The chain is Aspartate carbamoyltransferase catalytic subunit from Opitutus terrae (strain DSM 11246 / JCM 15787 / PB90-1).